Here is a 383-residue protein sequence, read N- to C-terminus: Ovalbumin (383 aa).

Residue glycine 2 is modified to N-acetylglycine. Residues 22–48 (HHANDNMLYSPFAILSTLAMVFLGAKD) constitute a signal peptide (not cleaved). Serine 69 carries the post-translational modification Phosphoserine. Residues cysteine 74 and cysteine 121 are joined by a disulfide bond. N-linked (GlcNAc...) asparagine glycans are attached at residues asparagine 293 and asparagine 312. The residue at position 345 (serine 345) is a Phosphoserine.

The protein belongs to the serpin family. Ov-serpin subfamily. The signal sequence is not cleaved. The functional signal for membrane translocation of ovalbumin becomes accessible when the nascent chain is 50 to 60 residues long. The hydrophobic sequence which lies between residues 27 and 43 folds back on the preceding residues to form an amphipathic hairpin structure which is the signal element recognized by the membrane. Major protein of egg white.

The protein resides in the secreted. Its function is as follows. Storage protein of egg white. Lack protease inhibitory activity. The sequence is that of Ovalbumin (SERPINB14) from Coturnix coturnix (Common quail).